Here is a 363-residue protein sequence, read N- to C-terminus: Glutamate 5-kinase (363 aa).

K6 contributes to the ATP binding site. Substrate is bound by residues S46, D133, and N145. Residues 165–166 and 207–213 contribute to the ATP site; these read TD and TGGMHTK. A PUA domain is found at 271-349; it reads TGRLLLDEGA…RDIEAVLGFT (79 aa).

It belongs to the glutamate 5-kinase family.

It is found in the cytoplasm. It catalyses the reaction L-glutamate + ATP = L-glutamyl 5-phosphate + ADP. Its pathway is amino-acid biosynthesis; L-proline biosynthesis; L-glutamate 5-semialdehyde from L-glutamate: step 1/2. Catalyzes the transfer of a phosphate group to glutamate to form L-glutamate 5-phosphate. The sequence is that of Glutamate 5-kinase from Deinococcus geothermalis (strain DSM 11300 / CIP 105573 / AG-3a).